We begin with the raw amino-acid sequence, 380 residues long: Outer membrane protein assembly factor BamB (380 aa).

The first 18 residues, 1–18, serve as a signal peptide directing secretion; it reads MVQWKHAALLALALAVVG. Cysteine 19 is lipidated: N-palmitoyl cysteine. The S-diacylglycerol cysteine moiety is linked to residue cysteine 19.

Belongs to the BamB family. Part of the Bam complex.

Its subcellular location is the cell outer membrane. In terms of biological role, part of the outer membrane protein assembly complex, which is involved in assembly and insertion of beta-barrel proteins into the outer membrane. The protein is Outer membrane protein assembly factor BamB of Pseudomonas aeruginosa (strain ATCC 15692 / DSM 22644 / CIP 104116 / JCM 14847 / LMG 12228 / 1C / PRS 101 / PAO1).